Here is a 274-residue protein sequence, read N- to C-terminus: MKKTQTWIITCIYLQLLLFNPLVHTQGICSNRVTDDVKDVTKLVANLPKDYMITLKYVPGMDVLPSHCWISEMVEQLSVSLTDLLDKFSNISEGLSNYCIIDKLVKIVDDLVECMEEHSSENVKKSSKSPEPRQFTPEKFFGIFNKSIDAFKDLEIVASKMSECVISSTSSPEKDSRVSVTKPFMLPPVAASSLRNDSSSSNRKASNSIEDSSLQWAAVALPAFFSLVIGFAFGAFYWKKKQPNLTRTVENRQINEEDNEISMLQEKEREFQEV.

Positions 1–25 (MKKTQTWIITCIYLQLLLFNPLVHT) are cleaved as a signal peptide. At glutamine 26 the chain carries Pyrrolidone carboxylic acid. Residues 26-215 (QGICSNRVTD…SNSIEDSSLQ (190 aa)) lie on the Extracellular side of the membrane. 2 disulfides stabilise this stretch: cysteine 29–cysteine 114 and cysteine 68–cysteine 164. Residues asparagine 90, asparagine 145, and asparagine 196 are each glycosylated (N-linked (GlcNAc...) asparagine). The helical transmembrane segment at 216–238 (WAAVALPAFFSLVIGFAFGAFYW) threads the bilayer. Over 239–274 (KKKQPNLTRTVENRQINEEDNEISMLQEKEREFQEV) the chain is Cytoplasmic.

It belongs to the SCF family. As to quaternary structure, homodimer, non-covalently linked. A soluble form is produced by proteolytic processing of isoform 1 in the extracellular domain.

Its subcellular location is the cell membrane. It is found in the cytoplasm. The protein localises to the cytoskeleton. It localises to the cell projection. The protein resides in the lamellipodium. Its subcellular location is the filopodium. It is found in the secreted. Functionally, stimulates the proliferation of mast cells. Able to augment the proliferation of both myeloid and lymphoid hematopoietic progenitors in bone marrow culture. Also mediates cell-cell adhesion. Acts synergistically with other cytokines, probably interleukins. The sequence is that of Kit ligand (KITLG) from Bos taurus (Bovine).